The following is a 433-amino-acid chain: Glutamate-1-semialdehyde 2,1-aminomutase (433 aa).

Residue lysine 266 is modified to N6-(pyridoxal phosphate)lysine.

It belongs to the class-III pyridoxal-phosphate-dependent aminotransferase family. HemL subfamily. As to quaternary structure, homodimer. The cofactor is pyridoxal 5'-phosphate.

It is found in the cytoplasm. It catalyses the reaction (S)-4-amino-5-oxopentanoate = 5-aminolevulinate. It participates in porphyrin-containing compound metabolism; protoporphyrin-IX biosynthesis; 5-aminolevulinate from L-glutamyl-tRNA(Glu): step 2/2. In Psychrobacter cryohalolentis (strain ATCC BAA-1226 / DSM 17306 / VKM B-2378 / K5), this protein is Glutamate-1-semialdehyde 2,1-aminomutase.